Reading from the N-terminus, the 356-residue chain is S-adenosylmethionine:tRNA ribosyltransferase-isomerase (356 aa).

Belongs to the QueA family. As to quaternary structure, monomer.

The protein resides in the cytoplasm. The enzyme catalyses 7-aminomethyl-7-carbaguanosine(34) in tRNA + S-adenosyl-L-methionine = epoxyqueuosine(34) in tRNA + adenine + L-methionine + 2 H(+). Its pathway is tRNA modification; tRNA-queuosine biosynthesis. Transfers and isomerizes the ribose moiety from AdoMet to the 7-aminomethyl group of 7-deazaguanine (preQ1-tRNA) to give epoxyqueuosine (oQ-tRNA). The sequence is that of S-adenosylmethionine:tRNA ribosyltransferase-isomerase from Chromohalobacter salexigens (strain ATCC BAA-138 / DSM 3043 / CIP 106854 / NCIMB 13768 / 1H11).